We begin with the raw amino-acid sequence, 155 residues long: SsrA-binding protein (155 aa).

The protein belongs to the SmpB family.

Its subcellular location is the cytoplasm. In terms of biological role, required for rescue of stalled ribosomes mediated by trans-translation. Binds to transfer-messenger RNA (tmRNA), required for stable association of tmRNA with ribosomes. tmRNA and SmpB together mimic tRNA shape, replacing the anticodon stem-loop with SmpB. tmRNA is encoded by the ssrA gene; the 2 termini fold to resemble tRNA(Ala) and it encodes a 'tag peptide', a short internal open reading frame. During trans-translation Ala-aminoacylated tmRNA acts like a tRNA, entering the A-site of stalled ribosomes, displacing the stalled mRNA. The ribosome then switches to translate the ORF on the tmRNA; the nascent peptide is terminated with the 'tag peptide' encoded by the tmRNA and targeted for degradation. The ribosome is freed to recommence translation, which seems to be the essential function of trans-translation. This is SsrA-binding protein from Streptococcus equi subsp. zooepidemicus (strain H70).